A 328-amino-acid chain; its full sequence is 3,4-dihydroxyphenylacetaldehyde synthase 2 (328 aa).

Asparagine 111 is a catalytic residue. Lysine 222 bears the N6-(pyridoxal phosphate)lysine mark.

The protein belongs to the group II decarboxylase family. The cofactor is pyridoxal 5'-phosphate.

The catalysed reaction is L-dopa + O2 + H2O + H(+) = 3,4-dihydroxyphenylacetaldehyde + H2O2 + NH4(+) + CO2. Its function is as follows. Catalyzes the decarboxylation-oxidative deamination of L-3,4-dihydroxyphenylalanine (L-DOPA) to 3,4-dihydroxylphenylacetaldehyde (DHPAA). Involved in cuticle development. Probably responsible for the protein cross-linking during the development of flexible cuticles. The sequence is that of 3,4-dihydroxyphenylacetaldehyde synthase 2 (amd) from Drosophila simulans (Fruit fly).